Here is a 276-residue protein sequence, read N- to C-terminus: Putative hydro-lyase Xaut_1503 (276 aa).

This sequence belongs to the D-glutamate cyclase family.

This Xanthobacter autotrophicus (strain ATCC BAA-1158 / Py2) protein is Putative hydro-lyase Xaut_1503.